Consider the following 219-residue polypeptide: N-(5'-phosphoribosyl)anthranilate isomerase (219 aa).

Belongs to the TrpF family.

It catalyses the reaction N-(5-phospho-beta-D-ribosyl)anthranilate = 1-(2-carboxyphenylamino)-1-deoxy-D-ribulose 5-phosphate. It functions in the pathway amino-acid biosynthesis; L-tryptophan biosynthesis; L-tryptophan from chorismate: step 3/5. This is N-(5'-phosphoribosyl)anthranilate isomerase from Mesorhizobium japonicum (strain LMG 29417 / CECT 9101 / MAFF 303099) (Mesorhizobium loti (strain MAFF 303099)).